The sequence spans 478 residues: Pathogenicity cluster 5 protein d (478 aa).

A signal peptide spans 1–19; that stretch reads MQIQNLIAALAGMAVVAEA. Disordered stretches follow at residues 35–89 and 299–400; these read RQNK…GQAN and NGGK…GGKG. Low complexity predominate over residues 38-64; the sequence is KGGNNNNNNNNNNNNNNNNNKNNGGNN. Polar residues predominate over residues 65 to 89; it reads QLCLNPNNVQKGSQQAGTPKQGQAN. Over residues 316–326 the composition is skewed to gly residues; the sequence is NNDGGGGGNDG. Composition is skewed to low complexity over residues 327–348 and 379–393; these read GNNS…QNGA and TQAG…TNGN. N-linked (GlcNAc...) asparagine glycans are attached at residues Asn328 and Asn332.

It localises to the secreted. Secreted protein required for appressorial penetration of intact host epidermal cells and for pathogenicit, but not for subsequent biotrophic and necrotrophic colonization of leaves. This is Pathogenicity cluster 5 protein d from Colletotrichum graminicola (strain M1.001 / M2 / FGSC 10212) (Maize anthracnose fungus).